Reading from the N-terminus, the 266-residue chain is Small ribosomal subunit protein uS3 (266 aa).

Residues 39-107 (VREYLKKKLK…PVHVNIEEIR (69 aa)) form the KH type-2 domain. A disordered region spans residues 214–266 (PVVEEVTEDKRPRRNARPGDRRPRRDGEGGAPGARRGGPRRGAGKPEDGKTGE). Basic and acidic residues-rich tracts occupy residues 230 to 241 (RPGDRRPRRDGE) and 257 to 266 (GKPEDGKTGE).

It belongs to the universal ribosomal protein uS3 family. In terms of assembly, part of the 30S ribosomal subunit. Forms a tight complex with proteins S10 and S14.

Its function is as follows. Binds the lower part of the 30S subunit head. Binds mRNA in the 70S ribosome, positioning it for translation. This is Small ribosomal subunit protein uS3 from Burkholderia mallei (strain NCTC 10247).